The following is a 200-amino-acid chain: Cytochrome c biogenesis ATP-binding export protein CcmA (200 aa).

In terms of domain architecture, ABC transporter spans 1–199 (MRLTGRGLRC…AARELRIGGA (199 aa)). 35-42 (GANGAGKT) lines the ATP pocket.

The protein belongs to the ABC transporter superfamily. CcmA exporter (TC 3.A.1.107) family. The complex is composed of two ATP-binding proteins (CcmA) and two transmembrane proteins (CcmB).

The protein resides in the cell inner membrane. The catalysed reaction is heme b(in) + ATP + H2O = heme b(out) + ADP + phosphate + H(+). In terms of biological role, part of the ABC transporter complex CcmAB involved in the biogenesis of c-type cytochromes; once thought to export heme, this seems not to be the case, but its exact role is uncertain. Responsible for energy coupling to the transport system. This is Cytochrome c biogenesis ATP-binding export protein CcmA from Rhodopseudomonas palustris (strain BisB18).